The sequence spans 2198 residues: RNA-directed RNA polymerase L (2198 aa).

Residues Lys-26–Cys-284 are endonuclease. Residues Glu-51, Asp-89, and Glu-102 each coordinate Mn(2+). The active site involves Lys-115. The RdRp catalytic domain maps to Cys-1161–Val-1359. Residue Asp-1319 coordinates Mg(2+).

Belongs to the Bunyavirales RNA polymerase family. In terms of assembly, homomultimer; the oligomeric structure is essential for the polymerase activity. Interacts with nucleoprotein N. Interacts with protein Z; this interaction inhibits viral transcription and replication, Z partially blocks the product exit tunnel for the releasing nascent RNA product. Requires Mn(2+) as cofactor. Mg(2+) serves as cofactor.

The protein localises to the virion. The protein resides in the host cytoplasm. It catalyses the reaction RNA(n) + a ribonucleoside 5'-triphosphate = RNA(n+1) + diphosphate. RNA-dependent RNA polymerase, which is responsible for the replication and transcription of the viral RNA genome using antigenomic RNA as an intermediate. During transcription, synthesizes subgenomic RNAs and assures their capping by a cap-snatching mechanism, which involves the endonuclease activity cleaving the host capped pre-mRNAs. These short capped RNAs are then used as primers for viral transcription. The 3'-end of subgenomic mRNAs molecules are heterogeneous and not polyadenylated. The replicase function is to direct synthesis of antigenomic and genomic RNA which are encapsidated and non capped. As a consequence of the use of the same enzyme for both transcription and replication, these mechanisms need to be well coordinated. These processes may be regulated by proteins N and Z in a dose-dependent manner. Z protein inhibits the viral polymerase L und thus the viral transcription and RNA synthesis. The polypeptide is RNA-directed RNA polymerase L (Homo sapiens (Human)).